A 330-amino-acid chain; its full sequence is Quinone oxidoreductase (330 aa).

The residue at position 2 (Ala-2) is an N-acetylalanine. Lys-23 is modified (N6-acetyllysine). Residues Tyr-53, 158-161, Gly-181, His-200, Asn-229, 246-249, and 269-271 each bind NADP(+); these read SGGV, VGSK, and VTL. Ser-248 carries the post-translational modification Phosphoserine.

This sequence belongs to the zinc-containing alcohol dehydrogenase family. Quinone oxidoreductase subfamily. As to quaternary structure, homotetramer.

Its subcellular location is the cytoplasm. The enzyme catalyses 2 a quinone + NADPH + H(+) = 2 a 1,4-benzosemiquinone + NADP(+). In terms of biological role, does not have alcohol dehydrogenase activity. Binds NADP and acts through a one-electron transfer process. Orthoquinones, such as 1,2-naphthoquinone or 9,10-phenanthrenequinone, are the best substrates (in vitro). May act in the detoxification of xenobiotics. Interacts with (AU)-rich elements (ARE) in the 3'-UTR of target mRNA species and enhances their stability. NADPH binding interferes with mRNA binding. The protein is Quinone oxidoreductase (CRYZ) of Lama guanicoe (Guanaco).